The chain runs to 258 residues: Chymotrypsin-like elastase family member 1 (258 aa).

Residues Met-1–Ser-8 form the signal peptide. Residues Thr-9–Arg-18 constitute a propeptide, activation peptide. A Peptidase S1 domain is found at Val-19–Ala-256. A disulfide bridge connects residues Cys-48 and Cys-64. The Charge relay system role is filled by His-63. Ca(2+)-binding residues include Glu-77, Asn-79, Gln-82, and Glu-87. N-linked (GlcNAc...) asparagine glycosylation occurs at Asn-79. The active-site Charge relay system is the Asp-111. 3 disulfides stabilise this stretch: Cys-145-Cys-212, Cys-176-Cys-192, and Cys-202-Cys-232. The active-site Charge relay system is the Ser-206. A glycan (N-linked (GlcNAc...) asparagine) is linked at Asn-233.

The protein belongs to the peptidase S1 family. Elastase subfamily. It depends on Ca(2+) as a cofactor.

It localises to the secreted. It catalyses the reaction Hydrolysis of proteins, including elastin. Preferential cleavage: Ala-|-Xaa.. Functionally, serine proteases that hydrolyze many proteins in addition to elastin. This is Chymotrypsin-like elastase family member 1 (CELA1) from Canis lupus familiaris (Dog).